Reading from the N-terminus, the 59-residue chain is Cortexin domain containing 2 (59 aa).

The chain crosses the membrane as a helical span at residues 20–40 (FAIAFVVLVFVFLIVMVFRCV).

Its subcellular location is the membrane. The polypeptide is Cortexin domain containing 2 (Mus musculus (Mouse)).